The following is a 62-amino-acid chain: Probable tautomerase SH1546 (62 aa).

Residue proline 2 is the Proton acceptor; via imino nitrogen of the active site.

The protein belongs to the 4-oxalocrotonate tautomerase family.

This Staphylococcus haemolyticus (strain JCSC1435) protein is Probable tautomerase SH1546.